We begin with the raw amino-acid sequence, 402 residues long: MKITAARVIITCPGRNFVTLKIETDQGVYGIGDATLNGRELSVVAYLQEHVAPCLIGMDPRRIEDIWQYVYRGAYWRRGPVTMRAIAAVDMALWDIKAKMAGMPLYQLLGGRSRDGIMVYGHANGSDIAETVEAVGHYIDMGYKAIRAQTGVPGIKDAYGVGRGKLYYEPADASLPSVTGWDTRKALNYVPKLFEELRKTYGFDHHLLHDGHHRYTPQEAANLGKMLEPYQLFWLEDCTPAENQEAFRLVRQHTVTPLAVGEIFNTIWDAKDLIQNQLIDYIRATVVGAGGLTHLRRIADLASLYQVRTGCHGATDLSPVTMGCALHFDTWVPNFGIQEYMRHTEETDAVFPHDYWFEKGELFVGETPGHGVDIDEELAAKYPYKPAYLPVARLEDGTMWNW.

Residues N37 and H122 each contribute to the substrate site. Y159 acts as the Proton donor/acceptor in catalysis. Residue D210 coordinates Mg(2+). H212 functions as the Proton donor/acceptor in the catalytic mechanism. Mg(2+)-binding residues include E236 and E262. Positions 262, 283, 312, 316, and 339 each coordinate substrate.

Belongs to the mandelate racemase/muconate lactonizing enzyme family. GalD subfamily. In terms of assembly, homotetramer. Mg(2+) is required as a cofactor.

The enzyme catalyses D-mannonate = 2-dehydro-3-deoxy-D-gluconate + H2O. It participates in carbohydrate metabolism; pentose and glucuronate interconversion. Its function is as follows. Catalyzes the dehydration of D-mannonate. Has no detectable activity with a panel of 70 other acid sugars (in vitro). This is D-mannonate dehydratase (manD) from Novosphingobium aromaticivorans (strain ATCC 700278 / DSM 12444 / CCUG 56034 / CIP 105152 / NBRC 16084 / F199).